Reading from the N-terminus, the 562-residue chain is Solute carrier family 40 member 1 (562 aa).

The Cytoplasmic segment spans residues 1–20 (MDSPASKKPRCERFREFFKS). Residues 21 to 50 (AKFLIYVGHALSTWGDRMWNFAVAVFLVEL) form a helical membrane-spanning segment. Asp-36 is a binding site for Fe cation. The Extracellular portion of the chain corresponds to 51–54 (YGNS). The chain crosses the membrane as a helical span at residues 55–81 (LLLTAVYGLVVAGSVLLLGAIIGDWVD). The Cytoplasmic segment spans residues 82–84 (KNP). A helical membrane pass occupies residues 85–115 (RLKVAQTSLVVQNSAVILCGALLMAVFQFKQ). The Extracellular portion of the chain corresponds to 116 to 123 (QLSSMYDG). Residues 124-159 (WLLTTCYIMVISIANIANLASTAMSITIQRDWVVVV) traverse the membrane as a helical segment. The Cytoplasmic portion of the chain corresponds to 160-161 (AG). The chain crosses the membrane as a helical span at residues 162-192 (DDRSKLADMNATVRIIDQLTNILAPMLVGQI). Over 193–199 (MAFGSHF) the chain is Extracellular. The chain crosses the membrane as a helical span at residues 200–226 (IGCGFISGWNLFSMCLEYFLLWKVYQK). Over 227–300 (TPALAFKAGQ…DGWVAYYNQS (74 aa)) the chain is Cytoplasmic. The chain crosses the membrane as a helical span at residues 301–327 (IFFAGMSLAFLYMTVLGFDCITTGYAY). Cys-320 serves as a coordination point for Fe cation. At 328–332 (TQGLN) the chain is on the extracellular side. A helical transmembrane segment spans residues 333 to 360 (GSVLSLLMGASAVSGICGTVAFTWIRKK). The Cytoplasmic portion of the chain corresponds to 361-362 (CG). A helical membrane pass occupies residues 363–385 (LIRTGFIAGVTQLSCLTLCVASV). At 386 to 444 (FAPGSPFDLSVSPFEEVLRHLFGDSGSLRESPTFIPTTEPPIQANVTVFEEAPPVESYM) the chain is on the extracellular side. The chain crosses the membrane as a helical span at residues 445–474 (SVGLLFAGVIAARVGLWSFDLTVTQLIQEN). The Cytoplasmic portion of the chain corresponds to 475 to 479 (VIESE). A helical transmembrane segment spans residues 480–504 (RGVINGVQNSMNYLLDLLHFIMVIL). Residue His-498 participates in Fe cation binding. The Extracellular segment spans residues 505 to 507 (APN). Residues 508–533 (PEAFGLLVIISVSFVAMGHMMYFRFA) traverse the membrane as a helical segment. The Cytoplasmic portion of the chain corresponds to 534–562 (YKSLGSRLFLFCSPEQKPDPNIPSLPNSV).

It belongs to the ferroportin (FP) (TC 2.A.100) family. SLC40A subfamily. Expressed in the yolk sac and placenta.

The protein resides in the cell membrane. It localises to the basolateral cell membrane. It catalyses the reaction Fe(2+)(in) = Fe(2+)(out). Its function is as follows. Transports Fe(2+) from the inside of a cell to the outside of the cell, playing a key role for maintaining systemic iron homeostasis. May be involved in transfer of Fe(2+) between maternal and fetal circulation. The chain is Solute carrier family 40 member 1 (slc40a1) from Danio rerio (Zebrafish).